Reading from the N-terminus, the 492-residue chain is Phytoene desaturase (lycopene-forming) (492 aa).

Residue 5-38 (TVIGAGFGGLALAIRLQAAGIPVLLLEQRDKPGG) participates in FAD binding.

It belongs to the carotenoid/retinoid oxidoreductase family. It depends on FAD as a cofactor.

It is found in the cell membrane. It catalyses the reaction 15-cis-phytoene + 4 A = all-trans-lycopene + 4 AH2. Its pathway is carotenoid biosynthesis; lycopene biosynthesis. With respect to regulation, inhibited by NAD and NADP. Converts 15-cis-phytoene into all-trans-lycopene via the intermediary of all-trans-phytofluene, all-trans-zeta-carotene and all-trans-neurosporene, by the introduction of four double bonds. This is Phytoene desaturase (lycopene-forming) (crtI) from Pantoea ananas (Erwinia uredovora).